A 3748-amino-acid polypeptide reads, in one-letter code: Intermembrane lipid transfer protein VPS13C (3748 aa).

The 113-residue stretch at 3-115 folds into the Chorein N-terminal domain; it reads LESVVADLLN…SLQDIKQKEL (113 aa). S132 is subject to Phosphoserine. Position 613 is a phosphothreonine (T613). S618 bears the Phosphoserine mark. At T623 the chain carries Phosphothreonine. Phosphoserine occurs at positions 736, 841, 871, and 873. The FFAT signature appears at 876–882; that stretch reads EFFDAED. T1968 is subject to Phosphothreonine. Residues S1974 and S2442 each carry the phosphoserine modification. Positions 2410–3304 are required for late endosome/lysosome localization; that stretch reads DYSLKDRAPF…IQQDIDALNT (895 aa). One can recognise an SHR-BD domain in the interval 2760–3012; it reads ELSVFSPYWL…LFAWADPTGI (253 aa). Residues 3305–3748 form a required for lipid droplet localization region; it reads ELMESSMTDM…VKLLRPQGPS (444 aa). An omega-N-methylarginine mark is found at R3514 and R3521. The residue at position 3533 (K3533) is an N6-acetyllysine.

The protein belongs to the VPS13 family.

It localises to the mitochondrion outer membrane. The protein localises to the lipid droplet. It is found in the endoplasmic reticulum membrane. The protein resides in the lysosome membrane. Its subcellular location is the late endosome membrane. Functionally, mediates the transfer of lipids between membranes at organelle contact sites. Necessary for proper mitochondrial function and maintenance of mitochondrial transmembrane potential. Involved in the regulation of PINK1/PRKN-mediated mitophagy in response to mitochondrial depolarization. The protein is Intermembrane lipid transfer protein VPS13C of Mus musculus (Mouse).